Reading from the N-terminus, the 692-residue chain is DNA ligase (692 aa).

Over residues 1–14 (MQPDLFSTASQADA) the composition is skewed to polar residues. The tract at residues 1 to 27 (MQPDLFSTASQADANATPEEPDASNPA) is disordered. NAD(+) contacts are provided by residues 54 to 58 (DAEYD), 103 to 104 (SL), and glutamate 134. Lysine 136 functions as the N6-AMP-lysine intermediate in the catalytic mechanism. NAD(+) is bound by residues arginine 157, glutamate 194, lysine 311, and lysine 335. Positions 429, 432, 447, and 454 each coordinate Zn(2+). In terms of domain architecture, BRCT spans 612 to 692 (NKPKPFAGKT…ALLQLLDTHE (81 aa)).

Belongs to the NAD-dependent DNA ligase family. LigA subfamily. Mg(2+) serves as cofactor. Mn(2+) is required as a cofactor.

It catalyses the reaction NAD(+) + (deoxyribonucleotide)n-3'-hydroxyl + 5'-phospho-(deoxyribonucleotide)m = (deoxyribonucleotide)n+m + AMP + beta-nicotinamide D-nucleotide.. Its function is as follows. DNA ligase that catalyzes the formation of phosphodiester linkages between 5'-phosphoryl and 3'-hydroxyl groups in double-stranded DNA using NAD as a coenzyme and as the energy source for the reaction. It is essential for DNA replication and repair of damaged DNA. This chain is DNA ligase, found in Janthinobacterium sp. (strain Marseille) (Minibacterium massiliensis).